A 963-amino-acid polypeptide reads, in one-letter code: MADPAECNIKVMCRFRPLNESEVNRGDKYVAKFQGEDTVMIASKPYAFDRVFQSSTSQEQVYNDCAKKIVKDVLEGYNGTIFAYGQTSSGKTHTMEGKLHDPEGMGIIPRIVQDIFNYIYSMDENLEFHIKVSYFEIYLDKIRDLLDVSKTNLSVHEDKNRVPYVKGCTERFVCSPDEVMDTIDEGKSNRHVAVTNMNEHSSRSHSIFLINVKQENTQTEQKLSGKLYLVDLAGSEKVSKTGAEGAVLDEAKNINKSLSALGNVISALAEGSTYVPYRDSKMTRILQDSLGGNCRTTIVICCSPSSYNESETKSTLLFGQRAKTIKNTVCVNVELTAEQWKKKYEKEKEKNKTLRNTIQWLENELNRWRNGETVPIDEQFDKEKANLEAFTADKDIAITSDKPAAAVGMAGSFTDAERRKCEEELAKLYKQLDDKDEEINQQSQLVEKLKTQMLDQEELLASTRRDQDNMQAELNRLQAENDASKEEVKEVLQALEELAVNYDQKSQEVEDKTKEYELLSDELNQKSATLASIDAELQKLKEMTNHQKKRAAEMMASLLKDLAEIGIAVGNNDVKQPEGTGMIDEEFTVARLYISKMKSEVKTMVKRCKQLESTQTESNKKMEENEKELAACQLRISQHEAKIKSLTEYLQNVEQKKRQLEESVDSLGEELVQLRAQEKVHEMEKEHLNKVQTANEVKQAVEQQIQSHRETHQKQISSLRDEVEAKEKLITDLQDQNQKMVLEQERLRVEHERLKATDQEKSRKLHELTVMQDRREQARQDLKGLEETVAKELQTLHNLRKLFVQDLATRVKKSAEVDSDDTGGSAAQKQKISFLENNLEQLTKVHKQLVRDNADLRCELPKLEKRLRATAERVKALESALKEAKENASRDRKRYQQEVDRIKEAVRSKNMARRGHSAQIAKPIRPGQHPAASPTHPGTVRGGGSFVQNNQPVGLRGGGGKQS.

The residue at position 2 (Ala2) is an N-acetylalanine. Positions 8 to 325 (NIKVMCRFRP…LLFGQRAKTI (318 aa)) constitute a Kinesin motor domain. 85-92 (GQTSSGKT) contacts ATP. A Glycyl lysine isopeptide (Lys-Gly) (interchain with G-Cter in SUMO2) cross-link involves residue Lys213. Positions 329 to 914 (VCVNVELTAE…AVRSKNMARR (586 aa)) form a coiled coil. The tract at residues 908 to 963 (SKNMARRGHSAQIAKPIRPGQHPAASPTHPGTVRGGGSFVQNNQPVGLRGGGGKQS) is disordered. The globular stretch occupies residues 915 to 963 (GHSAQIAKPIRPGQHPAASPTHPGTVRGGGSFVQNNQPVGLRGGGGKQS). Ser933 and Ser945 each carry phosphoserine. Arg956 is modified (omega-N-methylarginine).

Belongs to the TRAFAC class myosin-kinesin ATPase superfamily. Kinesin family. Kinesin subfamily. Oligomer composed of two heavy chains and two light chains. Interacts with GRIP1 and PPP1R42. Interacts with SYBU. Interacts with JAKMIP1. Interacts with PLEKHM2. Interacts with ECPAS. Interacts with ZFYVE27. Found in a complex with OGT, RHOT1, RHOT2 and TRAK1. Interacts with APP (via cytoplasmic domain).

The protein localises to the cytoplasm. It is found in the cytoskeleton. Its subcellular location is the cytolytic granule membrane. It localises to the lysosome membrane. In terms of biological role, microtubule-dependent motor required for normal distribution of mitochondria and lysosomes. May be involved in the mechanisms of growth arrest induced by exposure to DNA-damaging drugs or by cellular senescence. Can induce formation of neurite-like membrane protrusions in non-neuronal cells in a ZFYVE27-dependent manner. Regulates centrosome and nuclear positioning during mitotic entry. During the G2 phase of the cell cycle in a BICD2-dependent manner, antagonizes dynein function and drives the separation of nuclei and centrosomes. Required for anterograde axonal transportation of MAPK8IP3/JIP3 which is essential for MAPK8IP3/JIP3 function in axon elongation. Through binding with PLEKHM2 and ARL8B, directs lysosome movement toward microtubule plus ends. Involved in NK cell-mediated cytotoxicity. Drives the polarization of cytolytic granules and microtubule-organizing centers (MTOCs) toward the immune synapse between effector NK lymphocytes and target cells. The polypeptide is Kinesin-1 heavy chain (Kif5b) (Mus musculus (Mouse)).